The following is a 398-amino-acid chain: Alpha-2,8-sialyltransferase 8F (398 aa).

Residues 1–3 (MRP) lie on the Cytoplasmic side of the membrane. Residues 4-24 (GGALLALLASLLLLLLLRLLW) traverse the membrane as a helical; Signal-anchor for type II membrane protein segment. Topologically, residues 25–398 (CPADAPGRAR…KLQFSKCEVA (374 aa)) are lumenal. 4 N-linked (GlcNAc...) asparagine glycosylation sites follow: Asn-66, Asn-93, Asn-151, and Asn-196. 2 disulfide bridges follow: Cys-186/Cys-335 and Cys-200/Cys-395. Substrate-binding positions include Asn-214, 236–238 (NPS), and 322–324 (STG). The active-site Proton donor/acceptor is the His-370.

The protein belongs to the glycosyltransferase 29 family.

It localises to the golgi apparatus membrane. It catalyses the reaction a ganglioside GM3 + CMP-N-acetyl-beta-neuraminate = a ganglioside GD3 + CMP + H(+). The enzyme catalyses a ganglioside GM3 (d18:1(4E)) + CMP-N-acetyl-beta-neuraminate = a ganglioside GD3 (d18:1(4E)) + CMP + H(+). The catalysed reaction is a ganglioside GD1a (d18:1(4E)) + CMP-N-acetyl-beta-neuraminate = a ganglioside GT1a (d18:1(4E)) + CMP + H(+). It carries out the reaction a ganglioside GD1a + CMP-N-acetyl-beta-neuraminate = a ganglioside GT1a + CMP + H(+). It catalyses the reaction a ganglioside GM1b (d18:1(4E)) + CMP-N-acetyl-beta-neuraminate = a ganglioside GD1c (d18:1(4E)) + CMP + H(+). The enzyme catalyses a ganglioside GM1b + CMP-N-acetyl-beta-neuraminate = a ganglioside GD1c + CMP + H(+). The catalysed reaction is a ganglioside GM4 (d18:1(4E)) + CMP-N-acetyl-beta-neuraminate = an N-acetyl-alpha-neuraminosyl-(2-&gt;8)-N-acetyl-alpha-neuraminosyl-(2-&gt;3)-beta-D-galactosyl-(1&lt;-&gt;1')-N-acylsphing-4-enine + CMP + H(+). It carries out the reaction N-acetyl-alpha-neuraminosyl-(2-&gt;3)-beta-D-galactosyl-(1&lt;-&gt;1')-ceramide + CMP-N-acetyl-beta-neuraminate = N-acetyl-alpha-neuraminosyl-(2-&gt;8)-N-acetyl-alpha-neuraminosyl-(2-&gt;3)-beta-D-galactosyl-(1&lt;-&gt;1')-ceramide + CMP + H(+). It catalyses the reaction a ganglioside GT1b (d18:1(4E)) + CMP-N-acetyl-beta-neuraminate = a ganglioside GQ1b (d18:1(4E)) + CMP + H(+). The enzyme catalyses a ganglioside GT1b + CMP-N-acetyl-beta-neuraminate = a ganglioside GQ1b + CMP + H(+). It participates in protein modification; protein glycosylation. In terms of biological role, alpha-2,8-sialyltransferase that prefers O-glycans to N-glycans or glycolipids as acceptor substrates. The minimal acceptor substrate is the NeuAc-alpha-2,3(6)-Gal sequence at the non-reducing end of their carbohydrate groups. The sequence is that of Alpha-2,8-sialyltransferase 8F from Homo sapiens (Human).